We begin with the raw amino-acid sequence, 635 residues long: Threonine--tRNA ligase (635 aa).

The 61-residue stretch at 1–61 (MIAITLPDGS…EQNVDLAIVT (61 aa)) folds into the TGS domain. Residues 242 to 533 (DHRKLGKLLD…LLENHAGALP (292 aa)) form a catalytic region. Zn(2+)-binding residues include Cys-333, His-384, and His-510.

This sequence belongs to the class-II aminoacyl-tRNA synthetase family. In terms of assembly, homodimer. It depends on Zn(2+) as a cofactor.

The protein resides in the cytoplasm. It catalyses the reaction tRNA(Thr) + L-threonine + ATP = L-threonyl-tRNA(Thr) + AMP + diphosphate + H(+). Its function is as follows. Catalyzes the attachment of threonine to tRNA(Thr) in a two-step reaction: L-threonine is first activated by ATP to form Thr-AMP and then transferred to the acceptor end of tRNA(Thr). Also edits incorrectly charged L-seryl-tRNA(Thr). This is Threonine--tRNA ligase from Ralstonia nicotianae (strain ATCC BAA-1114 / GMI1000) (Ralstonia solanacearum).